The primary structure comprises 85 residues: Protein RALF-like 28 (85 aa).

Positions 1–31 (MSILKETKRFMVVAMFIACVFISNNMNVAVA) are cleaved as a signal peptide. 2 disulfides stabilise this stretch: Cys-48–Cys-53 and Cys-66–Cys-72. The disordered stretch occupies residues 60-85 (NPYHRGCEKSKRCRGPDPPALPRKMI). Residues 75 to 85 (PDPPALPRKMI) show a composition bias toward pro residues.

It belongs to the plant rapid alkalinization factor (RALF) family.

Its subcellular location is the secreted. Functionally, cell signaling peptide that may regulate plant stress, growth, and development. Mediates a rapid alkalinization of extracellular space by mediating a transient increase in the cytoplasmic Ca(2+) concentration leading to a calcium-dependent signaling events through a cell surface receptor and a concomitant activation of some intracellular mitogen-activated protein kinases. The chain is Protein RALF-like 28 (RALFL28) from Arabidopsis thaliana (Mouse-ear cress).